The primary structure comprises 347 residues: GMP reductase (347 aa).

108–131 (ADFEKTKQILAQSPALNFVCIDVA) is a binding site for NADP(+). K(+)-binding residues include G181 and G183. Catalysis depends on C186, which acts as the Thioimidate intermediate. Residue 216–239 (IVSDGGCTMPGDVAKAFGGGADFV) coordinates NADP(+).

This sequence belongs to the IMPDH/GMPR family. GuaC type 1 subfamily. As to quaternary structure, homotetramer.

The enzyme catalyses IMP + NH4(+) + NADP(+) = GMP + NADPH + 2 H(+). In terms of biological role, catalyzes the irreversible NADPH-dependent deamination of GMP to IMP. It functions in the conversion of nucleobase, nucleoside and nucleotide derivatives of G to A nucleotides, and in maintaining the intracellular balance of A and G nucleotides. The protein is GMP reductase of Citrobacter koseri (strain ATCC BAA-895 / CDC 4225-83 / SGSC4696).